Reading from the N-terminus, the 243-residue chain is Type III pantothenate kinase (243 aa).

6-13 is an ATP binding site; the sequence is DIGNTVAK. Residues Tyr-86 and 93 to 96 each bind substrate; that span reads GYDR. The active-site Proton acceptor is Asp-95. Asp-116 serves as a coordination point for K(+). An ATP-binding site is contributed by Thr-119. Substrate is bound at residue Thr-171.

Belongs to the type III pantothenate kinase family. In terms of assembly, homodimer. NH4(+) serves as cofactor. Requires K(+) as cofactor.

The protein localises to the cytoplasm. The catalysed reaction is (R)-pantothenate + ATP = (R)-4'-phosphopantothenate + ADP + H(+). It participates in cofactor biosynthesis; coenzyme A biosynthesis; CoA from (R)-pantothenate: step 1/5. Functionally, catalyzes the phosphorylation of pantothenate (Pan), the first step in CoA biosynthesis. The polypeptide is Type III pantothenate kinase (Bacteroides fragilis (strain YCH46)).